The following is a 267-amino-acid chain: Transcription factor HES-1 (267 aa).

The tract at residues 1–45 (MPADLMEKNSSSPVAATPASMSNTPDKPKTASEHRKSSKPIMEKR) is disordered. The span at 8 to 25 (KNSSSPVAATPASMSNTP) shows a compositional bias: polar residues. Positions 26–35 (DKPKTASEHR) are enriched in basic and acidic residues. The 58-residue stretch at 34-91 (HRKSSKPIMEKRRRARINESLGQLKTLILDALKKDSSRHSKLEKADILEMTVKHLRNL) folds into the bHLH domain. Positions 110–143 (YRAGFSECMNEVTRFLSTCEGVNTDVRTRLLGHL) constitute an Orange domain. Positions 264–267 (WRPW) match the WRPW motif motif.

In terms of assembly, transcription repression requires formation of a complex with a corepressor protein of the Groucho/TLE family. Interacts with the bHLH protein hes2, and binds DNA in the form of a heterodimer with the bHLH protein hey1/hrt1. Interacts with the bHLH protein hes6; this interaction may inhibit the transcriptional repressor activity.

It is found in the nucleus. Its function is as follows. Transcriptional repressor of a subset of early mesodermal genes including myod1 and t/bra. Binds DNA on N-box motifs: 5'-CACNAG-3'. Acts as a negative regulator of myogenesis, mediating Notch signaling to repress expression of myod1. The polypeptide is Transcription factor HES-1 (Xenopus tropicalis (Western clawed frog)).